A 412-amino-acid polypeptide reads, in one-letter code: Adipocyte plasma membrane-associated protein (412 aa).

Positions 1 to 32 (MTEADGLRQRRPLRPQVVTDDNRTPEAKGGSS) are disordered. The Cytoplasmic portion of the chain corresponds to 1–39 (MTEADGLRQRRPLRPQVVTDDNRTPEAKGGSSFSGRVFR). Thr19 carries the post-translational modification Phosphothreonine. A helical membrane pass occupies residues 40–60 (ATFLMLAAFLTIPLLGALVLL). At 61–412 (DSPIDPEPLS…RAPYLCRLRL (352 aa)) the chain is on the extracellular side. Asn159 carries N-linked (GlcNAc...) asparagine glycosylation.

The protein belongs to the strictosidine synthase family.

The protein localises to the membrane. Functionally, exhibits strong arylesterase activity with beta-naphthyl acetate and phenyl acetate. May play a role in adipocyte differentiation. The polypeptide is Adipocyte plasma membrane-associated protein (APMAP) (Bos taurus (Bovine)).